The chain runs to 83 residues: Transmembrane protein EP84R (83 aa).

2 consecutive transmembrane segments (helical) span residues 31 to 51 and 59 to 79; these read IIGVILLVICLLFILIGIIIL and AGSIFVVLSLILGGGGFFLIY.

The protein belongs to the asfivirus EP84R family.

It is found in the virion membrane. The chain is Transmembrane protein EP84R from Ornithodoros (relapsing fever ticks).